Consider the following 871-residue polypeptide: MADSSEGPRAGPGEVAELPGDESGTPGGEAFPLSSLANLFEGEDGSLSPSPADASRPAGPGDGRPNLRMKFQGAFRKGVPNPIDLLESTLYESSVVPGPKKAPMDSLFDYGTYRHHSSDNKRWRKKIIEKQPQSPKAPAPQPPPILKVFNRPILFDIVSRGSTADLDGLLPFLLTHKKRLTDEEFREPSTGKTCLPKALLNLSNGRNDTIPVLLDIAERTGNMREFINSPFRDIYYRGQTALHIAIERRCKHYVELLVAQGADVHAQARGRFFQPKDEGGYFYFGELPLSLAACTNQPHIVNYLTENPHKKADMRRQDSRGNTVLHALVAIADNTRENTKFVTKMYDLLLLKCARLFPDSNLEAVLNNDGLSPLMMAAKTGKIGIFQHIIRREVTDEDTRHLSRKFKDWAYGPVYSSLYDLSSLDTCGEEASVLEILVYNSKIENRHEMLAVEPINELLRDKWRKFGAVSFYINVVSYLCAMVIFTLTAYYQPLEGTPPYPYRTTVDYLRLAGEVITLFTGVLFFFTNIKDLFMKKCPGVNSLFIDGSFQLLYFIYSVLVIVSAALYLAGIEAYLAVMVFALVLGWMNALYFTRGLKLTGTYSIMIQKILFKDLFRFLLVYLLFMIGYASALVSLLNPCANMKVCNEDQTNCTVPTYPSCRDSETFSTFLLDLFKLTIGMGDLEMLSSTKYPVVFIILLVTYIILTFVLLLNMLIALMGETVGQVSKESKHIWKLQWATTILDIERSFPVFLRKAFRSGEMVTVGKSSDGTPDRRWCFRVDEVNWSHWNQNLGIINEDPGKNETYQYYGFSHTVGRLRRDRWSSVVPRVVELNKNSNPDEVVVPLDSMGNPRCDGHQQGYPRKWRTDDAPL.

Positions 1–68 (MADSSEGPRA…GPGDGRPNLR (68 aa)) are disordered. Residues 1–469 (MADSSEGPRA…RDKWRKFGAV (469 aa)) are Cytoplasmic-facing. At Y110 the chain carries Phosphotyrosine. ATP is bound by residues K192, K197, N201, 236 to 239 (YRGQ), and R248. 2 ANK repeats span residues 237–266 (RGQT…DVHA) and 284–313 (FGEL…KKAD). 249–251 (RCK) contributes to the a 1,2-diacyl-sn-glycero-3-phospho-(1D-myo-inositol-4,5-bisphosphate) binding site. Residue Y253 is modified to Phosphotyrosine. A 1,2-diacyl-sn-glycero-3-phospho-(1D-myo-inositol-4,5-bisphosphate) contacts are provided by residues 296–299 (NQPH) and K344. The ANK 3 repeat unit spans residues 369 to 398 (DGLSPLMMAAKTGKIGIFQHIIRREVTDED). A helical membrane pass occupies residues 470 to 490 (SFYINVVSYLCAMVIFTLTAY). Residues 491 to 507 (YQPLEGTPPYPYRTTVD) are Extracellular-facing. A helical membrane pass occupies residues 508-534 (YLRLAGEVITLFTGVLFFFTNIKDLFM). Residues 535–547 (KKCPGVNSLFIDG) lie on the Cytoplasmic side of the membrane. A helical membrane pass occupies residues 548-568 (SFQLLYFIYSVLVIVSAALYL). The Extracellular portion of the chain corresponds to 569-572 (AGIE). The helical transmembrane segment at 573–593 (AYLAVMVFALVLGWMNALYFT) threads the bilayer. Over 594–608 (RGLKLTGTYSIMIQK) the chain is Cytoplasmic. The helical transmembrane segment at 609-636 (ILFKDLFRFLLVYLLFMIGYASALVSLL) threads the bilayer. Topologically, residues 637 to 665 (NPCANMKVCNEDQTNCTVPTYPSCRDSET) are extracellular. Positions 666–685 (FSTFLLDLFKLTIGMGDLEM) form an intramembrane region, pore-forming. The Selectivity filter motif lies at 679–682 (GMGD). Residue D682 coordinates Ca(2+). Residues 686–693 (LSSTKYPV) are Extracellular-facing. The chain crosses the membrane as a helical span at residues 694 to 722 (VFIILLVTYIILTFVLLLNMLIALMGETV). Over 723 to 871 (GQVSKESKHI…RKWRTDDAPL (149 aa)) the chain is Cytoplasmic. Y805 is modified (phosphotyrosine). The segment at 812–831 (HTVGRLRRDRWSSVVPRVVE) is interaction with calmodulin and ITPR3. S824 carries the phosphoserine modification. The disordered stretch occupies residues 849 to 871 (GNPRCDGHQQGYPRKWRTDDAPL).

It belongs to the transient receptor (TC 1.A.4) family. TrpV subfamily. TRPV4 sub-subfamily. As to quaternary structure, homotetramer. Self-associates in an isoform-specific manner. Isoform 1 and isoform 5 can oligomerize, but isoform 2, isoform 4 and isoform 6 cannot oligomerize. Interacts with calmodulin. Interacts with Map7 and Src family Tyr protein kinases LYN, SRC, FYN, HCK, LCK and YES. Interacts with CTNNB1. The TRPV4 and CTNNB1 complex can interact with CDH1. Interacts with PACSIN1, PACSIN2 and PACSIN3 (via SH3 domain). Part of a complex containing MLC1, AQP4, HEPACAM and ATP1B1. Interacts with ITPR3. Interacts with AQP5; the interaction is probably indirect and regulates TRPV4 activation by hypotonicity. Interacts with ANO1. Interacts (via C-terminus) with PKD2 (via C-terminus). Interacts with DDX3X; this interaction is decreased when the channel is activated. Post-translationally, N-glycosylated. Found in the synoviocytes from patients with (RA) and without (CTR) rheumatoid arthritis (at protein level).

The protein localises to the cell membrane. Its subcellular location is the apical cell membrane. It is found in the cell junction. The protein resides in the adherens junction. It localises to the cell projection. The protein localises to the cilium. Its subcellular location is the endoplasmic reticulum. The enzyme catalyses Ca(2+)(in) = Ca(2+)(out). Its activity is regulated as follows. Channel activation is inhibited by binding to phosphatidylinositol-4,5-bisphosphate, and to a much lesser degree by phosphatidylinositol-3,4,5-trisphosphate. Not inhibited by phosphatidylinositol-3,4-bisphosphate and phosphatidylinositol-3,5-bisphosphate. Functionally, non-selective calcium permeant cation channel involved in osmotic sensitivity and mechanosensitivity. Activation by exposure to hypotonicity within the physiological range exhibits an outward rectification. Also activated by heat, low pH, citrate and phorbol esters. Increase of intracellular Ca(2+) potentiates currents. Channel activity seems to be regulated by a calmodulin-dependent mechanism with a negative feedback mechanism. Promotes cell-cell junction formation in skin keratinocytes and plays an important role in the formation and/or maintenance of functional intercellular barriers. Acts as a regulator of intracellular Ca(2+) in synoviocytes. Plays an obligatory role as a molecular component in the nonselective cation channel activation induced by 4-alpha-phorbol 12,13-didecanoate and hypotonic stimulation in synoviocytes and also regulates production of IL-8. Together with PKD2, forms mechano- and thermosensitive channels in cilium. Negatively regulates expression of PPARGC1A, UCP1, oxidative metabolism and respiration in adipocytes. Regulates expression of chemokines and cytokines related to pro-inflammatory pathway in adipocytes. Together with AQP5, controls regulatory volume decrease in salivary epithelial cells. Required for normal development and maintenance of bone and cartilage. In its inactive state, may sequester DDX3X at the plasma membrane. When activated, the interaction between both proteins is affected and DDX3X relocalizes to the nucleus. In neurons of the central nervous system, could play a role in triggering voluntary water intake in response to increased sodium concentration in body fluid. Its function is as follows. Non-selective calcium permeant cation channel involved in osmotic sensitivity and mechanosensitivity. Activation by exposure to hypotonicity within the physiological range exhibits an outward rectification. Also activated by phorbol esters. Has the same channel activity as isoform 1, and is activated by the same stimuli. Lacks channel activity, due to impaired oligomerization and intracellular retention. In terms of biological role, (Microbial infection) Facilitates hepatitis C virus (HCV) replication, possibly through its action on DDX3X. Functionally, (Microbial infection) Facilitates Dengue virus (DENV) replication, possibly through its action on DDX3X. Its function is as follows. (Microbial infection) Facilitates Zika virus (ZIKV) replication, possibly through its action on DDX3X. The sequence is that of Transient receptor potential cation channel subfamily V member 4 (TRPV4) from Homo sapiens (Human).